The primary structure comprises 332 residues: Ribosomal RNA small subunit methyltransferase H (332 aa).

Residues 34–36, D59, F86, D112, and Q119 contribute to the S-adenosyl-L-methionine site; that span reads GGH.

This sequence belongs to the methyltransferase superfamily. RsmH family.

The protein localises to the cytoplasm. It carries out the reaction cytidine(1402) in 16S rRNA + S-adenosyl-L-methionine = N(4)-methylcytidine(1402) in 16S rRNA + S-adenosyl-L-homocysteine + H(+). In terms of biological role, specifically methylates the N4 position of cytidine in position 1402 (C1402) of 16S rRNA. In Chlorobium phaeobacteroides (strain BS1), this protein is Ribosomal RNA small subunit methyltransferase H.